We begin with the raw amino-acid sequence, 155 residues long: Small ribosomal subunit protein uS7 (155 aa).

This sequence belongs to the universal ribosomal protein uS7 family. In terms of assembly, part of the 30S ribosomal subunit. Contacts proteins S9 and S11.

Functionally, one of the primary rRNA binding proteins, it binds directly to 16S rRNA where it nucleates assembly of the head domain of the 30S subunit. Is located at the subunit interface close to the decoding center, probably blocks exit of the E-site tRNA. This Lactococcus lactis subsp. lactis (strain IL1403) (Streptococcus lactis) protein is Small ribosomal subunit protein uS7.